Reading from the N-terminus, the 166-residue chain is Large ribosomal subunit protein uL10 (166 aa).

It belongs to the universal ribosomal protein uL10 family. As to quaternary structure, part of the ribosomal stalk of the 50S ribosomal subunit. The N-terminus interacts with L11 and the large rRNA to form the base of the stalk. The C-terminus forms an elongated spine to which L12 dimers bind in a sequential fashion forming a multimeric L10(L12)X complex.

Its function is as follows. Forms part of the ribosomal stalk, playing a central role in the interaction of the ribosome with GTP-bound translation factors. This chain is Large ribosomal subunit protein uL10, found in Bacillus cereus (strain G9842).